Reading from the N-terminus, the 539-residue chain is Chaperonin GroEL (539 aa).

Residues 30-33 (TLGP), 87-91 (DGTTT), Gly-414, 479-481 (DAL), and Asp-495 each bind ATP.

The protein belongs to the chaperonin (HSP60) family. Forms a cylinder of 14 subunits composed of two heptameric rings stacked back-to-back. Interacts with the co-chaperonin GroES.

Its subcellular location is the cytoplasm. The enzyme catalyses ATP + H2O + a folded polypeptide = ADP + phosphate + an unfolded polypeptide.. Functionally, together with its co-chaperonin GroES, plays an essential role in assisting protein folding. The GroEL-GroES system forms a nano-cage that allows encapsulation of the non-native substrate proteins and provides a physical environment optimized to promote and accelerate protein folding. The sequence is that of Chaperonin GroEL from Caldicellulosiruptor saccharolyticus (strain ATCC 43494 / DSM 8903 / Tp8T 6331).